Reading from the N-terminus, the 201-residue chain is Holliday junction resolvase RecU (201 aa).

Residues threonine 87, aspartate 89, glutamate 102, and glutamine 121 each coordinate Mg(2+).

It belongs to the RecU family. It depends on Mg(2+) as a cofactor.

The protein localises to the cytoplasm. The catalysed reaction is Endonucleolytic cleavage at a junction such as a reciprocal single-stranded crossover between two homologous DNA duplexes (Holliday junction).. Its function is as follows. Endonuclease that resolves Holliday junction intermediates in genetic recombination. Cleaves mobile four-strand junctions by introducing symmetrical nicks in paired strands. Promotes annealing of linear ssDNA with homologous dsDNA. Required for DNA repair, homologous recombination and chromosome segregation. The sequence is that of Holliday junction resolvase RecU from Listeria welshimeri serovar 6b (strain ATCC 35897 / DSM 20650 / CCUG 15529 / CIP 8149 / NCTC 11857 / SLCC 5334 / V8).